The following is a 355-amino-acid chain: Agamous-like MADS-box protein AGL81 (355 aa).

The tract at residues 1-22 (MAIRSLPSSSRCSSSSSSSSYS) is disordered. An MADS-box domain is found at 26–68 (TSLSNRLETIFKKASELCTLCDIEACVIYYGPDGELKTWPPER). Over residues 162–174 (VESQKHKETKPDH) the composition is skewed to basic and acidic residues. A disordered region spans residues 162-186 (VESQKHKETKPDHQSLASSSLNHQT). The span at 176–186 (SLASSSLNHQT) shows a compositional bias: polar residues.

Interacts with MEE14/CBP1.

The protein localises to the nucleus. Functionally, probable transcription factor that may function in the maintenance of the proper function of the central cell in pollen tube attraction. The protein is Agamous-like MADS-box protein AGL81 of Arabidopsis thaliana (Mouse-ear cress).